The primary structure comprises 55 residues: Large ribosomal subunit protein bL33 (55 aa).

This sequence belongs to the bacterial ribosomal protein bL33 family.

This is Large ribosomal subunit protein bL33 from Mycobacterium leprae (strain Br4923).